Here is a 417-residue protein sequence, read N- to C-terminus: Gamma-glutamyl phosphate reductase (417 aa).

Belongs to the gamma-glutamyl phosphate reductase family.

It is found in the cytoplasm. The enzyme catalyses L-glutamate 5-semialdehyde + phosphate + NADP(+) = L-glutamyl 5-phosphate + NADPH + H(+). It participates in amino-acid biosynthesis; L-proline biosynthesis; L-glutamate 5-semialdehyde from L-glutamate: step 2/2. Functionally, catalyzes the NADPH-dependent reduction of L-glutamate 5-phosphate into L-glutamate 5-semialdehyde and phosphate. The product spontaneously undergoes cyclization to form 1-pyrroline-5-carboxylate. The protein is Gamma-glutamyl phosphate reductase of Legionella pneumophila subsp. pneumophila (strain Philadelphia 1 / ATCC 33152 / DSM 7513).